We begin with the raw amino-acid sequence, 165 residues long: UPF0669 protein v1g209471 (165 aa).

Residues 1-23 form the signal peptide; it reads MQGRYSAPLFLLLWLFFLHGTLC. Residue Asn38 is glycosylated (N-linked (GlcNAc...) asparagine).

It belongs to the UPF0669 family.

It localises to the secreted. The protein is UPF0669 protein v1g209471 of Nematostella vectensis (Starlet sea anemone).